A 188-amino-acid chain; its full sequence is dCTP deaminase (188 aa).

Residues 111–116 (KSTYAR), 135–137 (TLE), Q156, Y170, K179, and Q180 contribute to the dCTP site. Catalysis depends on E137, which acts as the Proton donor/acceptor.

The protein belongs to the dCTP deaminase family. As to quaternary structure, homotrimer.

It catalyses the reaction dCTP + H2O + H(+) = dUTP + NH4(+). It functions in the pathway pyrimidine metabolism; dUMP biosynthesis; dUMP from dCTP (dUTP route): step 1/2. Catalyzes the deamination of dCTP to dUTP. This chain is dCTP deaminase, found in Rickettsia akari (strain Hartford).